Here is a 202-residue protein sequence, read N- to C-terminus: Oocyte-secreted protein 1 (202 aa).

Residues Met1 to Ala21 form the signal peptide. Residues Gln157–Ala183 are disordered.

It belongs to the PLAC1 family. As to expression, expressed in oocytes in primary through antral-stage follicles. Expressed in liver and ovary.

It localises to the secreted. Its function is as follows. May be involved in cell differentiation. This Mus musculus (Mouse) protein is Oocyte-secreted protein 1 (Oosp1).